The chain runs to 381 residues: MPVHDDHCNPNPAPLYLGLMSGTSIDGIDAALVRINANPITHCELIAAQTSAWDPNLRTTLLELSQGQNTASLDQLGWLDAQVGLAFATAANTLIAKTGIKHTQIRAIGSHGQTIRHRPHGDLPFTWQLGDAHRIAELTGITTVADFRRRDVAAGGQGAPLMPAFHLAILGSANENRAVLNLGGIANLTLIPMTGPVLGFDTGPANALLDSWYQRHHHETFDQSGNFAASGKINQKLLACLLDDPWFTLPPPKSTGREQFHLDWMTKQLEPTPPSPADVQATLLELTAVTVADALLRQQPKTTRLLICGGGAHNPVLMARLATHLPNVTVESIQTYGLNPDYLEAMGFAWLAAQTLDGQPSNLPSVTGARGLRLLGAIHPA.

An ATP-binding site is contributed by 22 to 29 (GTSIDGID).

It belongs to the anhydro-N-acetylmuramic acid kinase family.

It carries out the reaction 1,6-anhydro-N-acetyl-beta-muramate + ATP + H2O = N-acetyl-D-muramate 6-phosphate + ADP + H(+). The protein operates within amino-sugar metabolism; 1,6-anhydro-N-acetylmuramate degradation. Its pathway is cell wall biogenesis; peptidoglycan recycling. In terms of biological role, catalyzes the specific phosphorylation of 1,6-anhydro-N-acetylmuramic acid (anhMurNAc) with the simultaneous cleavage of the 1,6-anhydro ring, generating MurNAc-6-P. Is required for the utilization of anhMurNAc either imported from the medium or derived from its own cell wall murein, and thus plays a role in cell wall recycling. The polypeptide is Anhydro-N-acetylmuramic acid kinase (Xylella fastidiosa (strain Temecula1 / ATCC 700964)).